The following is a 357-amino-acid chain: Phenylalanine--tRNA ligase alpha subunit (357 aa).

Mg(2+) is bound at residue E259.

Belongs to the class-II aminoacyl-tRNA synthetase family. Phe-tRNA synthetase alpha subunit type 1 subfamily. In terms of assembly, tetramer of two alpha and two beta subunits. It depends on Mg(2+) as a cofactor.

Its subcellular location is the cytoplasm. The enzyme catalyses tRNA(Phe) + L-phenylalanine + ATP = L-phenylalanyl-tRNA(Phe) + AMP + diphosphate + H(+). The sequence is that of Phenylalanine--tRNA ligase alpha subunit from Jannaschia sp. (strain CCS1).